The following is a 379-amino-acid chain: Cytochrome b (379 aa).

Helical transmembrane passes span 33–53, 77–98, 113–133, and 178–198; these read FGSLLGMCLMIQILTGLFLAM, WLIRYLHANGASMFFICLFIHV, WNIGIILFLMTMATAFVGYVL, and FFAFHFILPFIIAAFALVHLL. Heme b-binding residues include H83 and H97. Positions 182 and 196 each coordinate heme b. H201 contributes to the a ubiquinone binding site. Helical transmembrane passes span 226-246, 288-308, 320-340, and 347-367; these read TKDLLGIFLLLLVLMILALFF, LGGVLALILSILILAAFPLLN, VTQVIYWIFTANLLVLTWIGG, and FTMIGQIASITYLAIIIILMP.

Belongs to the cytochrome b family. The cytochrome bc1 complex contains 11 subunits: 3 respiratory subunits (MT-CYB, CYC1 and UQCRFS1), 2 core proteins (UQCRC1 and UQCRC2) and 6 low-molecular weight proteins (UQCRH/QCR6, UQCRB/QCR7, UQCRQ/QCR8, UQCR10/QCR9, UQCR11/QCR10 and a cleavage product of UQCRFS1). This cytochrome bc1 complex then forms a dimer. Heme b is required as a cofactor.

Its subcellular location is the mitochondrion inner membrane. Component of the ubiquinol-cytochrome c reductase complex (complex III or cytochrome b-c1 complex) that is part of the mitochondrial respiratory chain. The b-c1 complex mediates electron transfer from ubiquinol to cytochrome c. Contributes to the generation of a proton gradient across the mitochondrial membrane that is then used for ATP synthesis. This is Cytochrome b (MT-CYB) from Akodon kofordi (Koford's grass mouse).